The sequence spans 296 residues: Nucleotide-binding protein spr1424 (296 aa).

13-20 is an ATP binding site; the sequence is GMGGAGKT. A GTP-binding site is contributed by 63 to 66; sequence DMRS.

This sequence belongs to the RapZ-like family.

Its function is as follows. Displays ATPase and GTPase activities. This is Nucleotide-binding protein spr1424 from Streptococcus pneumoniae (strain ATCC BAA-255 / R6).